We begin with the raw amino-acid sequence, 101 residues long: MSMEKMGKVEEHFQRALELKKMVHRWRNSHTHCLWQITLSQRRNPYAILRMQDTMVQELALANKQLLMVRQAALHQLFEKEHQQYQQELNEKGKAFYMERL.

In terms of assembly, microtubule inner protein component of sperm flagellar doublet microtubules. Expressed in trachea multiciliated cells.

Its subcellular location is the cytoplasm. It is found in the cytoskeleton. It localises to the cilium axoneme. The protein localises to the flagellum axoneme. Its function is as follows. Microtubule inner protein (MIP) part of the dynein-decorated doublet microtubules (DMTs) in cilia axoneme, which is required for motile cilia beating. In Bos taurus (Bovine), this protein is Cilia- and flagella-associated protein 141.